A 1403-amino-acid chain; its full sequence is Nidogen-2 (1403 aa).

The signal sequence occupies residues 1–30; it reads MFRDPTAGWLTPPSPLSLLVMLLLLSRVGA. The 167-residue stretch at 108–274 folds into the NIDO domain; it reads PFLADIDTSH…GVWAFHIGSR (167 aa). The segment at 323–403 is disordered; the sequence is EDVEYPPVEP…KQGRPVGEGE (81 aa). Residues Ser-386 and Ser-475 are each glycosylated (O-linked (Xyl...) (chondroitin sulfate) serine). The segment covering 386–395 has biased composition (polar residues); it reads SASLDPQTKQ. One can recognise an EGF-like 1 domain in the interval 507–547; that stretch reads NLETCEHSHGRCSQHAFCTDYTTGFCCHCQSRFYGNGKHCL. 3 cysteine pairs are disulfide-bonded: Cys-511–Cys-524, Cys-518–Cys-533, and Cys-535–Cys-546. The region spanning 551–781 is the Nidogen G2 beta-barrel domain; sequence APHRVNGKVS…GPVEVDSAPV (231 aa). Residues Asn-681, Asn-716, and Asn-726 are each glycosylated (N-linked (GlcNAc...) asparagine). Residues 782 to 823 form the EGF-like 2 domain; that stretch reads GVNPCYDGSHTCDTTARCHPGTGVDYTCECTPGFQGDGRSCV. 18 disulfides stabilise this stretch: Cys-786-Cys-799, Cys-793-Cys-809, Cys-811-Cys-822, Cys-828-Cys-841, Cys-835-Cys-850, Cys-852-Cys-865, Cys-875-Cys-890, Cys-882-Cys-900, Cys-902-Cys-913, Cys-919-Cys-930, Cys-924-Cys-939, Cys-941-Cys-952, Cys-968-Cys-991, Cys-1002-Cys-1009, Cys-1011-Cys-1033, Cys-1047-Cys-1071, Cys-1082-Cys-1089, and Cys-1091-Cys-1112. The region spanning 824-862 is the EGF-like 3; calcium-binding domain; that stretch reads DVNECATGFHRCGPNSVCVNLVGSYRCECRSGYEFADDQ. The EGF-like 4 domain maps to 871–914; the sequence is PPNPCLDGSHTCAPEGQARCIHHGGSSFSCACLPGFIGTGHQCS. Residues 915-953 form the EGF-like 5; calcium-binding domain; it reads DVDECAENRCHEAAICYNTPGSFSCRCQPGYRGDGFHCT. The short motif at 946 to 948 is the Cell attachment site element; that stretch reads RGD. Thyroglobulin type-1 domains follow at residues 965-1033 and 1044-1112; these read LKPC…PPHC and RTVC…RPAC. Residues 1021-1043 are disordered; the sequence is GTQTPPGSTPPHCGPPPEPTQRP. Residues 1027–1040 show a composition bias toward pro residues; it reads GSTPPHCGPPPEPT. Asn-1152 carries N-linked (GlcNAc...) asparagine glycosylation. LDL-receptor class B repeat units follow at residues 1182–1225, 1226–1268, 1269–1313, 1314–1355, and 1357–1401; these read RMVY…DHFR, RTMY…DPIR, GNLY…DPFS, KLLC…YADH, and YHTD…CPTG. Position 1336 is an omega-N-methylarginine (Arg-1336).

In terms of assembly, interacts with LAMA2. Interacts with COL13A1. Interacts with EFEMP2. In terms of processing, highly N- and O-glycosylated.

The protein localises to the secreted. Its subcellular location is the extracellular space. The protein resides in the extracellular matrix. It localises to the basement membrane. Functionally, cell adhesion glycoprotein. Might be involved in osteoblast differentiation. It probably has a role in cell-extracellular matrix interactions. The protein is Nidogen-2 (Nid2) of Mus musculus (Mouse).